A 491-amino-acid chain; its full sequence is Cyclin-B1-5 (491 aa).

The Cyclin N-terminal domain occupies 275–347 (DMYSFYKEVE…VKAVPKRELQ (73 aa)).

The protein belongs to the cyclin family. Cyclin AB subfamily. In terms of tissue distribution, expressed in roots, stems and flowers.

The polypeptide is Cyclin-B1-5 (CYCB1-5) (Arabidopsis thaliana (Mouse-ear cress)).